The following is a 239-amino-acid chain: MGRKWNNIKDKKASKDANTSRIYAKFGREIYVAAKQGEPDPESNQALKVVLERAKTYSVPKSIIDRAIEKAKGGSEENYDELRYEGFGPNGSMIIVDTLTNNVNRTAADVRAAFNKNGGNMGVNGSVAYMFDATAVIGLEGKTADEVLEILMEADVDARDILEEEDSVIIYAEPDQFHAVQEALKAAGTTEFTVAELTMLAQNDVELSEEAQAQFEKLIDALEDLDDVQQVYHNVDLGE.

Belongs to the TACO1 family. YeeN subfamily.

Its subcellular location is the cytoplasm. The polypeptide is Probable transcriptional regulatory protein Bcer98_0465 (Bacillus cytotoxicus (strain DSM 22905 / CIP 110041 / 391-98 / NVH 391-98)).